The primary structure comprises 68 residues: ATP synthase subunit c (68 aa).

Transmembrane regions (helical) follow at residues 4–24 (IAAA…NGLI) and 45–65 (IMFI…VIAF).

The protein belongs to the ATPase C chain family. As to quaternary structure, F-type ATPases have 2 components, F(1) - the catalytic core - and F(0) - the membrane proton channel. F(1) has five subunits: alpha(3), beta(3), gamma(1), delta(1), epsilon(1). F(0) has three main subunits: a(1), b(2) and c(10-14). The alpha and beta chains form an alternating ring which encloses part of the gamma chain. F(1) is attached to F(0) by a central stalk formed by the gamma and epsilon chains, while a peripheral stalk is formed by the delta and b chains.

It is found in the cell membrane. In terms of biological role, f(1)F(0) ATP synthase produces ATP from ADP in the presence of a proton or sodium gradient. F-type ATPases consist of two structural domains, F(1) containing the extramembraneous catalytic core and F(0) containing the membrane proton channel, linked together by a central stalk and a peripheral stalk. During catalysis, ATP synthesis in the catalytic domain of F(1) is coupled via a rotary mechanism of the central stalk subunits to proton translocation. Key component of the F(0) channel; it plays a direct role in translocation across the membrane. A homomeric c-ring of between 10-14 subunits forms the central stalk rotor element with the F(1) delta and epsilon subunits. In Staphylococcus saprophyticus subsp. saprophyticus (strain ATCC 15305 / DSM 20229 / NCIMB 8711 / NCTC 7292 / S-41), this protein is ATP synthase subunit c.